Reading from the N-terminus, the 756-residue chain is Polyribonucleotide nucleotidyltransferase (756 aa).

Residues D532 and D538 each contribute to the Mg(2+) site. The 60-residue stretch at 598–657 folds into the KH domain; sequence PRVTAIKVPVDKIGEVIGPKGKMINSITEQTGANISIEDDGTVFVGATDGPSAQAAIDMI. Residues 669-738 form the S1 motif domain; sequence GERFLGTVVK…ARGKISLIPV (70 aa).

This sequence belongs to the polyribonucleotide nucleotidyltransferase family. It depends on Mg(2+) as a cofactor.

The protein localises to the cytoplasm. The enzyme catalyses RNA(n+1) + phosphate = RNA(n) + a ribonucleoside 5'-diphosphate. Its function is as follows. Involved in mRNA degradation. Catalyzes the phosphorolysis of single-stranded polyribonucleotides processively in the 3'- to 5'-direction. In Rhodococcus erythropolis (strain PR4 / NBRC 100887), this protein is Polyribonucleotide nucleotidyltransferase.